Here is a 517-residue protein sequence, read N- to C-terminus: 2-isopropylmalate synthase (517 aa).

One can recognise a Pyruvate carboxyltransferase domain in the interval 5 to 267 (VIIFDTTLRD…HTNVRCQEIY (263 aa)). Mn(2+) contacts are provided by aspartate 14, histidine 202, histidine 204, and asparagine 238. Residues 392 to 517 (RLKCFHVDSS…QRKYIKKNNN (126 aa)) are regulatory domain.

This sequence belongs to the alpha-IPM synthase/homocitrate synthase family. LeuA type 1 subfamily. Homodimer. Mn(2+) is required as a cofactor.

Its subcellular location is the cytoplasm. It catalyses the reaction 3-methyl-2-oxobutanoate + acetyl-CoA + H2O = (2S)-2-isopropylmalate + CoA + H(+). It participates in amino-acid biosynthesis; L-leucine biosynthesis; L-leucine from 3-methyl-2-oxobutanoate: step 1/4. Catalyzes the condensation of the acetyl group of acetyl-CoA with 3-methyl-2-oxobutanoate (2-ketoisovalerate) to form 3-carboxy-3-hydroxy-4-methylpentanoate (2-isopropylmalate). This Blochmanniella pennsylvanica (strain BPEN) protein is 2-isopropylmalate synthase.